Here is a 340-residue protein sequence, read N- to C-terminus: Mitotic checkpoint protein BUB3.1 (340 aa).

The segment at 1–20 (MTTVTPSAGRELSNPPSDGI) is disordered. WD repeat units lie at residues 15 to 54 (PPSD…LKGE), 96 to 135 (THDK…GPER), 142 to 179 (LQPE…QPEQ), 239 to 278 (DIVY…RLYQ), and 281 to 324 (KYPT…RSVN).

It belongs to the WD repeat BUB3 family. In terms of assembly, part of the mitotic checkpoint complex (MCC); interacts with CDC20-1 and CDC20-2. Interacts with MAD2 and BUBR1. In terms of tissue distribution, expressed in actively dividing tissues, early in organ development, in young leaves, lateral root primordia and root meristems, flower buds, flowers and siliques.

The protein localises to the nucleus. It is found in the chromosome. Its subcellular location is the centromere. The protein resides in the kinetochore. It localises to the cytoplasm. The protein localises to the cytoskeleton. It is found in the phragmoplast. Its subcellular location is the spindle. Its function is as follows. Has a dual function in spindle-assembly checkpoint signaling and in promoting the establishment of correct kinetochore-microtubule (K-MT) attachments. Promotes the formation of stable end-on bipolar attachments. Necessary for kinetochore localization of BUB1. The BUB1/BUB3 complex plays a role in the inhibition of anaphase-promoting complex or cyclosome (APC/C) when spindle-assembly checkpoint is activated and inhibits the ubiquitin ligase activity of APC/C by phosphorylating its activator CDC20. Essential for gametophyte development. This chain is Mitotic checkpoint protein BUB3.1 (BUB3.1), found in Arabidopsis thaliana (Mouse-ear cress).